We begin with the raw amino-acid sequence, 445 residues long: Tubulin beta-3 chain (445 aa).

Gln-11, Glu-69, Ser-138, Gly-142, Thr-143, Gly-144, Asn-204, and Asn-226 together coordinate GTP. Residue Glu-69 participates in Mg(2+) binding. The segment at Tyr-425 to Asp-445 is disordered. Residues Thr-429–Asp-445 show a composition bias toward acidic residues.

Belongs to the tubulin family. Dimer of alpha and beta chains. A typical microtubule is a hollow water-filled tube with an outer diameter of 25 nm and an inner diameter of 15 nM. Alpha-beta heterodimers associate head-to-tail to form protofilaments running lengthwise along the microtubule wall with the beta-tubulin subunit facing the microtubule plus end conferring a structural polarity. Microtubules usually have 13 protofilaments but different protofilament numbers can be found in some organisms and specialized cells. The cofactor is Mg(2+).

The protein localises to the cytoplasm. Its subcellular location is the cytoskeleton. Its function is as follows. Tubulin is the major constituent of microtubules, a cylinder consisting of laterally associated linear protofilaments composed of alpha- and beta-tubulin heterodimers. Microtubules grow by the addition of GTP-tubulin dimers to the microtubule end, where a stabilizing cap forms. Below the cap, tubulin dimers are in GDP-bound state, owing to GTPase activity of alpha-tubulin. This Zea mays (Maize) protein is Tubulin beta-3 chain (TUBB3).